Here is a 303-residue protein sequence, read N- to C-terminus: MHGIEQPQLPLDYVHRCASTSFLLASLDGLLSEARELSGPLALITSSYYLLVSIALCWAIPGSFWYRPGCWLQPVSGRNLIFCGPTEALQRFRLYAARLGLVLSENCPRHGQSAAITLQSYWALPNNIWMDMAQLDLLTFSMPIANTFAYLADCEARFPPIVEGVGSAYYVPTLLGLTHQDPRLYLALRRRNLDLSGEPHRVRPGVLESMALLCSSVRSTSRSRQIPPLYGSVLHHVLGLAERDCILFDTDSNYSSYTHRVLEQDRNRADQSLFSIDLEYVHDLELIALGYSDEDDEDLDNFF.

Belongs to the polerovirus P0 protein family.

In terms of biological role, suppressor of RNA-mediated gene silencing. The sequence is that of Suppressor of silencing P0 from Pea enation mosaic virus-1 (strain WSG) (PEMV-1).